The chain runs to 102 residues: RNA-binding protein Hfq (102 aa).

The region spanning 9 to 68 (DPFLNALRRERVPVSIYLVNGIKLQGQIESFDQFVILLKNTVSQMVYKHAISTVVPSRPV) is the Sm domain. The tract at residues 65 to 102 (SRPVSHHSSNTSVGASVGNYHSGGVSAPAAQQESDGTE) is disordered. Residues 93–102 (AAQQESDGTE) are compositionally biased toward polar residues.

Belongs to the Hfq family. As to quaternary structure, homohexamer.

Functionally, RNA chaperone that binds small regulatory RNA (sRNAs) and mRNAs to facilitate mRNA translational regulation in response to envelope stress, environmental stress and changes in metabolite concentrations. Also binds with high specificity to tRNAs. This is RNA-binding protein Hfq from Photorhabdus laumondii subsp. laumondii (strain DSM 15139 / CIP 105565 / TT01) (Photorhabdus luminescens subsp. laumondii).